Here is a 71-residue protein sequence, read N- to C-terminus: UPF0352 protein Ssed_1809 (71 aa).

This sequence belongs to the UPF0352 family.

This chain is UPF0352 protein Ssed_1809, found in Shewanella sediminis (strain HAW-EB3).